The following is a 756-amino-acid chain: NADP-dependent malic enzyme (756 aa).

The tract at residues 1-428 (MTEQLRQAAL…KLTQFVYKTS (428 aa)) is malic enzyme. Catalysis depends on Y39, which acts as the Proton donor. The active-site Proton acceptor is K94. Residues E136, D137, and D162 each contribute to the a divalent metal cation site. NADP(+) is bound by residues 195-198 (AGAA), N288, and N320. Residues 429–756 (LFMRPIFSQA…AYAAVKAQQE (328 aa)) form a phosphate acetyltransferase region.

In the N-terminal section; belongs to the malic enzymes family. This sequence in the C-terminal section; belongs to the phosphate acetyltransferase and butyryltransferase family. Mg(2+) serves as cofactor. Requires Mn(2+) as cofactor.

It catalyses the reaction (S)-malate + NADP(+) = pyruvate + CO2 + NADPH. The catalysed reaction is oxaloacetate + H(+) = pyruvate + CO2. The sequence is that of NADP-dependent malic enzyme (maeB) from Haemophilus influenzae (strain ATCC 51907 / DSM 11121 / KW20 / Rd).